The chain runs to 306 residues: Ornithine carbamoyltransferase (306 aa).

Carbamoyl phosphate contacts are provided by residues 50–53, Gln-77, Arg-101, and 128–131; these read STRT and HPCQ. L-ornithine-binding positions include Asn-160, Asp-224, and 228-229; that span reads SM. Carbamoyl phosphate is bound by residues 264 to 265 and Arg-292; that span reads CL.

It belongs to the aspartate/ornithine carbamoyltransferase superfamily. OTCase family.

The protein localises to the cytoplasm. It catalyses the reaction carbamoyl phosphate + L-ornithine = L-citrulline + phosphate + H(+). Its pathway is amino-acid biosynthesis; L-arginine biosynthesis; L-arginine from L-ornithine and carbamoyl phosphate: step 1/3. Functionally, reversibly catalyzes the transfer of the carbamoyl group from carbamoyl phosphate (CP) to the N(epsilon) atom of ornithine (ORN) to produce L-citrulline. The sequence is that of Ornithine carbamoyltransferase from Mycobacterium leprae (strain TN).